The chain runs to 285 residues: Tryptophan synthase alpha chain (285 aa).

Active-site proton acceptor residues include E53 and D64.

This sequence belongs to the TrpA family. As to quaternary structure, tetramer of two alpha and two beta chains.

The catalysed reaction is (1S,2R)-1-C-(indol-3-yl)glycerol 3-phosphate + L-serine = D-glyceraldehyde 3-phosphate + L-tryptophan + H2O. It participates in amino-acid biosynthesis; L-tryptophan biosynthesis; L-tryptophan from chorismate: step 5/5. In terms of biological role, the alpha subunit is responsible for the aldol cleavage of indoleglycerol phosphate to indole and glyceraldehyde 3-phosphate. The polypeptide is Tryptophan synthase alpha chain (Bordetella bronchiseptica (strain ATCC BAA-588 / NCTC 13252 / RB50) (Alcaligenes bronchisepticus)).